Consider the following 47-residue polypeptide: Putative protein PinH (47 aa).

Positions 1-47 (MWHLVVLLEELCERGINFRALAQSIFAQQWGDECCKSKTICDLKVIV) constitute a Resolvase/invertase-type recombinase catalytic domain.

It belongs to the site-specific recombinase resolvase family.

The protein is Putative protein PinH (pinH) of Escherichia coli (strain K12).